The primary structure comprises 316 residues: MKTFVNIFLGFFIFESVGAVPITDTVTYDSEFYDVSLGELPHPFVSAENDQSDQVETEIGTAIPSIIQESYSSAPLTEEPEEEASTPKLIDGSSAQGSGVLVPQTQDGLPTCLLCTCLGTTVYCDDRELDAVPPLPKNTMYFYSRYNRIRKINKNDFANLNNLKRIDLTANLISEIHEDAFRRLPQLLELVLRDNRIRQLPELPSTLTLIDISNNRLGRKGIRNEAFKDLHELQHLYITDNNLDHVPLPLPESLQALHLQNNNIQEMHEDTFCKMRDFSYVRRALEDIRLDGNPINLSKTPYAYMCLPRLPVGNLI.

Positions 1–23 (MKTFVNIFLGFFIFESVGAVPIT) are cleaved as a signal peptide. O-linked (Xyl...) (dermatan sulfate) serine glycosylation is present at Ser-98. The 38-residue stretch at 100-137 (VLVPQTQDGLPTCLLCTCLGTTVYCDDRELDAVPPLPK) folds into the LRRNT domain. Cys-112 and Cys-124 are oxidised to a cystine. LRR repeat units follow at residues 138 to 159 (NTMYFYSRYNRIRKINKNDFAN), 162 to 183 (NLKRIDLTANLISEIHEDAFRR), 186 to 207 (QLLELVLRDNRIRQLPELPSTL), 232 to 252 (ELQHLYITDNNLDHVPLPLPE), 253 to 274 (SLQALHLQNNNIQEMHEDTFCK), and 284 to 304 (ALEDIRLDGNPINLSKTPYAY). Cys-273 and Cys-306 are oxidised to a cystine. Residue Asn-296 is glycosylated (N-linked (GlcNAc...) asparagine).

It belongs to the small leucine-rich proteoglycan (SLRP) family. SLRP class III subfamily. The O-linked glycosaminoglycan chain(s) are dermatan sulfate. In terms of tissue distribution, preferentially expressed in flattened chondrocytes of developing chick limb cartilage. Also found in the cartilage peripheral zone bordering with bone marrow cavity.

Its subcellular location is the secreted. It is found in the extracellular space. The protein resides in the extracellular matrix. Its function is as follows. May have a role in bone formation and also in establishing the ordered structure of cartilage through matrix organization. The chain is Epiphycan (EPYC) from Gallus gallus (Chicken).